The primary structure comprises 138 residues: Ribosome-binding factor A (138 aa).

This sequence belongs to the RbfA family. In terms of assembly, monomer. Binds 30S ribosomal subunits, but not 50S ribosomal subunits or 70S ribosomes.

The protein resides in the cytoplasm. Functionally, one of several proteins that assist in the late maturation steps of the functional core of the 30S ribosomal subunit. Associates with free 30S ribosomal subunits (but not with 30S subunits that are part of 70S ribosomes or polysomes). Required for efficient processing of 16S rRNA. May interact with the 5'-terminal helix region of 16S rRNA. This chain is Ribosome-binding factor A, found in Pseudoalteromonas atlantica (strain T6c / ATCC BAA-1087).